The sequence spans 146 residues: Sperm surface protein Sp17 (146 aa).

Residues 76-88 (EHESEKCEAEEKS) are compositionally biased toward basic and acidic residues. A disordered region spans residues 76–109 (EHESEKCEAEEKSQSVTEEETPVLTIDSEDDKDK). Over residues 92–108 (TEEETPVLTIDSEDDKD) the composition is skewed to acidic residues. The region spanning 110-139 (EEMAALKIQAAFRGHLAREDVKKIRTNKAE) is the IQ domain.

Homodimer. May interact with ROPN1. In terms of processing, the N-terminus is blocked. Testis- and sperm-specific.

It localises to the membrane. Sperm surface zona pellucida binding protein. Helps to bind spermatozoa to the zona pellucida with high affinity. Might function in binding zona pellucida and carbohydrates. The sequence is that of Sperm surface protein Sp17 (SPA17) from Oryctolagus cuniculus (Rabbit).